The chain runs to 272 residues: 3-methyl-2-oxobutanoate hydroxymethyltransferase (272 aa).

Mg(2+) contacts are provided by Asp-42 and Asp-86. Residues 42-43 (DS), Asp-86, and Lys-116 contribute to the 3-methyl-2-oxobutanoate site. Glu-118 is a binding site for Mg(2+). The active-site Proton acceptor is the Glu-185. Residues 251-272 (LKEQRDQRATPTTPPPPPAPDC) form a disordered region. The span at 262–272 (TTPPPPPAPDC) shows a compositional bias: pro residues.

This sequence belongs to the PanB family. As to quaternary structure, homodecamer; pentamer of dimers. The cofactor is Mg(2+).

It is found in the cytoplasm. It carries out the reaction 3-methyl-2-oxobutanoate + (6R)-5,10-methylene-5,6,7,8-tetrahydrofolate + H2O = 2-dehydropantoate + (6S)-5,6,7,8-tetrahydrofolate. It functions in the pathway cofactor biosynthesis; (R)-pantothenate biosynthesis; (R)-pantoate from 3-methyl-2-oxobutanoate: step 1/2. Its function is as follows. Catalyzes the reversible reaction in which hydroxymethyl group from 5,10-methylenetetrahydrofolate is transferred onto alpha-ketoisovalerate to form ketopantoate. This chain is 3-methyl-2-oxobutanoate hydroxymethyltransferase, found in Synechococcus sp. (strain CC9311).